The primary structure comprises 132 residues: Fatty acid-binding protein, brain (132 aa).

Valine 2 carries the N-acetylvaline modification. 127 to 129 (RCY) is an a fatty acid binding site.

This sequence belongs to the calycin superfamily. Fatty-acid binding protein (FABP) family. In terms of tissue distribution, expressed in brain and other neural tissues.

It localises to the cytoplasm. In terms of biological role, B-FABP could be involved in the transport of a so far unknown hydrophobic ligand with potential morphogenic activity during CNS development. It is required for the establishment of the radial glial fiber system in developing brain, a system that is necessary for the migration of immature neurons to establish cortical layers. This Mus musculus (Mouse) protein is Fatty acid-binding protein, brain (Fabp7).